The chain runs to 170 residues: Arginine repressor (170 aa).

The protein belongs to the ArgR family.

Its subcellular location is the cytoplasm. The protein operates within amino-acid biosynthesis; L-arginine biosynthesis [regulation]. Regulates arginine biosynthesis genes. The sequence is that of Arginine repressor from Mycobacterium tuberculosis (strain ATCC 25177 / H37Ra).